We begin with the raw amino-acid sequence, 134 residues long: Profilin-1 (134 aa).

A disulfide bond links Cys13 and Cys118. Residues Ala84 to Thr100 carry the Involved in PIP2 interaction motif. Thr114 is subject to Phosphothreonine.

Belongs to the profilin family. In terms of assembly, occurs in many kinds of cells as a complex with monomeric actin in a 1:1 ratio. In terms of processing, phosphorylated by MAP kinases.

The protein localises to the cytoplasm. It localises to the cytoskeleton. Its function is as follows. Binds to actin and affects the structure of the cytoskeleton. At high concentrations, profilin prevents the polymerization of actin, whereas it enhances it at low concentrations. This Olea europaea (Common olive) protein is Profilin-1.